A 362-amino-acid chain; its full sequence is MKETVIRKLEGLMERYEEVQALLGEPNVVSDQDKFRALTREYSQLGEVVAGFQQYQQAEADLQAIEEMLSGDDAEMKAMAQEELAEAKQLIERVEAELQVLLLPKDPKDDSNCFLEIRAGAGGDEAAIFAGDLFRMYSKYSERRGWRMEIMSTSDGEHGGYKEIIVRMEGDSVYGIMKFESGGHRVQRVPETESQGRVHTSACTVMVLPEIPEKEIPEINPADLRIDTFRASGAGGQHINKTDSAIRITHIPTGTVVECQDERSQHKNKARAMSVLAARLAQQEEDKRRAEADSTRRSILSTGDRSDRIRTYNYPQGRVSDHRINLTLYRLSEVMEGDLDSLLKPLQQEYQADQLAALSENN.

The residue at position 237 (glutamine 237) is an N5-methylglutamine. A compositionally biased stretch (basic and acidic residues) spans 282–296 (QQEEDKRRAEADSTR). Positions 282 to 304 (QQEEDKRRAEADSTRRSILSTGD) are disordered.

It belongs to the prokaryotic/mitochondrial release factor family. Post-translationally, methylated by PrmC. Methylation increases the termination efficiency of RF1.

It is found in the cytoplasm. Functionally, peptide chain release factor 1 directs the termination of translation in response to the peptide chain termination codons UAG and UAA. This is Peptide chain release factor 1 from Tolumonas auensis (strain DSM 9187 / NBRC 110442 / TA 4).